We begin with the raw amino-acid sequence, 466 residues long: Citrate synthase, mitochondrial (466 aa).

The N-terminal 27 residues, 1-27 (MALLTAAARLFGAKNASCLVLAARHAS), are a transit peptide targeting the mitochondrion. Residues 2–21 (ALLTAAARLFGAKNASCLVL) carry the SIFI-degron motif. Lys57 carries the N6-succinyllysine modification. At Lys76 the chain carries N6-acetyllysine; alternate. Lys76 carries the post-translational modification N6-succinyllysine; alternate. 2 positions are modified to N6-succinyllysine: Lys103 and Lys193. Ser226 is modified (phosphoserine). The active site involves His301. N6-acetyllysine; alternate occurs at positions 321 and 327. 2 positions are modified to N6-succinyllysine; alternate: Lys321 and Lys327. His347 is a catalytic residue. Oxaloacetate is bound at residue Arg356. The residue at position 375 (Lys375) is an N6-acetyllysine; alternate. The residue at position 375 (Lys375) is an N6-succinyllysine; alternate. Lys382 is modified (N6-acetyllysine). Lys393 is modified (N6-acetyllysine; alternate). The residue at position 393 (Lys393) is an N6-succinyllysine; alternate. Lys395 bears the N6,N6,N6-trimethyllysine mark. The active site involves Asp402. The oxaloacetate site is built by Arg428 and Arg448. Lys450 bears the N6-succinyllysine mark. Lys459 carries the post-translational modification N6-acetyllysine; alternate. The residue at position 459 (Lys459) is an N6-succinyllysine; alternate.

Belongs to the citrate synthase family. In terms of assembly, homodimer. Methylated. Trimethylation at Lys-395 by CSKMT decreases citrate synthase activity. Post-translationally, in response to mitochondrial stress, the precursor protein is ubiquitinated by the SIFI complex in the cytoplasm before mitochondrial import, leading to its degradation. Within the SIFI complex, UBR4 initiates ubiquitin chain that are further elongated or branched by KCMF1.

The protein resides in the mitochondrion matrix. The catalysed reaction is oxaloacetate + acetyl-CoA + H2O = citrate + CoA + H(+). It functions in the pathway carbohydrate metabolism; tricarboxylic acid cycle; isocitrate from oxaloacetate: step 1/2. Functionally, key enzyme of the Krebs tricarboxylic acid cycle which catalyzes the synthesis of citrate from acetyl coenzyme A and oxaloacetate. In Bos taurus (Bovine), this protein is Citrate synthase, mitochondrial (CS).